The sequence spans 101 residues: Small ribosomal subunit protein uS14 (101 aa).

The protein belongs to the universal ribosomal protein uS14 family. As to quaternary structure, part of the 30S ribosomal subunit. Contacts proteins S3 and S10.

In terms of biological role, binds 16S rRNA, required for the assembly of 30S particles and may also be responsible for determining the conformation of the 16S rRNA at the A site. This chain is Small ribosomal subunit protein uS14, found in Ruthia magnifica subsp. Calyptogena magnifica.